The following is a 137-amino-acid chain: Large ribosomal subunit protein uL16 (137 aa).

Belongs to the universal ribosomal protein uL16 family. In terms of assembly, part of the 50S ribosomal subunit.

In terms of biological role, binds 23S rRNA and is also seen to make contacts with the A and possibly P site tRNAs. In Beijerinckia indica subsp. indica (strain ATCC 9039 / DSM 1715 / NCIMB 8712), this protein is Large ribosomal subunit protein uL16.